The chain runs to 397 residues: pH-sensitive adenylate cyclase MT1302 (397 aa).

The segment at 1–191 (MTDHVREADD…IQDMLFMQLR (191 aa)) is regulatory domain. A linker region spans residues 192 to 206 (HMMETEAVNAGERAA). The tract at residues 211–397 (PGARQVTVAF…QDDDLAGSSP (187 aa)) is catalytic domain. In terms of domain architecture, Guanylate cyclase spans 217–325 (TVAFADLVGF…SPVNVASRVT (109 aa)). Aspartate 222 contacts Mn(2+). Lysine 261 lines the substrate pocket. Aspartate 265 contacts Mn(2+). Arginine 298 provides a ligand contact to ATP. Aspartate 312 lines the substrate pocket.

This sequence belongs to the adenylyl cyclase class-4/guanylyl cyclase family. As to quaternary structure, homodimer. Requires Mn(2+) as cofactor. Mg(2+) serves as cofactor.

It carries out the reaction ATP = 3',5'-cyclic AMP + diphosphate. In terms of biological role, catalyzes the formation of the second messenger cAMP. The chain is pH-sensitive adenylate cyclase MT1302 from Mycobacterium tuberculosis (strain CDC 1551 / Oshkosh).